The primary structure comprises 338 residues: Glycerol-3-phosphate dehydrogenase [NAD(P)+] (338 aa).

Positions 13, 14, and 108 each coordinate NADPH. The sn-glycerol 3-phosphate site is built by Lys108, Gly139, and Ser141. Residue Ala143 coordinates NADPH. Sn-glycerol 3-phosphate is bound by residues Lys194, Asp247, Ser257, Arg258, and Asn259. The Proton acceptor role is filled by Lys194. An NADPH-binding site is contributed by Arg258. NADPH contacts are provided by Val282 and Glu284.

Belongs to the NAD-dependent glycerol-3-phosphate dehydrogenase family.

It is found in the cytoplasm. It carries out the reaction sn-glycerol 3-phosphate + NAD(+) = dihydroxyacetone phosphate + NADH + H(+). It catalyses the reaction sn-glycerol 3-phosphate + NADP(+) = dihydroxyacetone phosphate + NADPH + H(+). It functions in the pathway membrane lipid metabolism; glycerophospholipid metabolism. Functionally, catalyzes the reduction of the glycolytic intermediate dihydroxyacetone phosphate (DHAP) to sn-glycerol 3-phosphate (G3P), the key precursor for phospholipid synthesis. The polypeptide is Glycerol-3-phosphate dehydrogenase [NAD(P)+] (Streptococcus pyogenes serotype M12 (strain MGAS9429)).